Here is a 494-residue protein sequence, read N- to C-terminus: Sulfate adenylyltransferase subunit 1 (494 aa).

In terms of domain architecture, tr-type G spans 24-240; that stretch reads TRPLRLITCG…LELATVRSAQ (217 aa). Positions 33-40 are G1; the sequence is GSVDDGKS. 33 to 40 contributes to the GTP binding site; that stretch reads GSVDDGKS. The tract at residues 91–95 is G2; the sequence is GITID. Residues 112–115 are G3; the sequence is DTPG. Residues 112–116 and 167–170 each bind GTP; these read DTPGH and NKID. The G4 stretch occupies residues 167–170; that stretch reads NKID. Residues 204–206 are G5; that stretch reads SAL.

Belongs to the TRAFAC class translation factor GTPase superfamily. Classic translation factor GTPase family. CysN/NodQ subfamily. In terms of assembly, heterodimer composed of CysD, the smaller subunit, and CysN.

It catalyses the reaction sulfate + ATP + H(+) = adenosine 5'-phosphosulfate + diphosphate. It participates in sulfur metabolism; hydrogen sulfide biosynthesis; sulfite from sulfate: step 1/3. In terms of biological role, with CysD forms the ATP sulfurylase (ATPS) that catalyzes the adenylation of sulfate producing adenosine 5'-phosphosulfate (APS) and diphosphate, the first enzymatic step in sulfur assimilation pathway. APS synthesis involves the formation of a high-energy phosphoric-sulfuric acid anhydride bond driven by GTP hydrolysis by CysN coupled to ATP hydrolysis by CysD. The polypeptide is Sulfate adenylyltransferase subunit 1 (Rhizobium rhizogenes (strain K84 / ATCC BAA-868) (Agrobacterium radiobacter)).